Reading from the N-terminus, the 412-residue chain is Putative competence-damage inducible protein (412 aa).

Belongs to the CinA family.

This chain is Putative competence-damage inducible protein, found in Bacillus mycoides (strain KBAB4) (Bacillus weihenstephanensis).